Reading from the N-terminus, the 212-residue chain is Pyridoxine/pyridoxamine 5'-phosphate oxidase (212 aa).

Substrate-binding positions include 8-11 (RRSY) and Lys66. FMN is bound by residues 61–66 (RIVLLK), 76–77 (FT), Arg82, Lys83, and Gln105. Residues Tyr123, Arg127, and Ser131 each contribute to the substrate site. FMN is bound by residues 140–141 (QS) and Trp184. Residue 190-192 (RLH) participates in substrate binding. An FMN-binding site is contributed by Arg194.

Belongs to the pyridoxamine 5'-phosphate oxidase family. As to quaternary structure, homodimer. FMN serves as cofactor.

The catalysed reaction is pyridoxamine 5'-phosphate + O2 + H2O = pyridoxal 5'-phosphate + H2O2 + NH4(+). The enzyme catalyses pyridoxine 5'-phosphate + O2 = pyridoxal 5'-phosphate + H2O2. The protein operates within cofactor metabolism; pyridoxal 5'-phosphate salvage; pyridoxal 5'-phosphate from pyridoxamine 5'-phosphate: step 1/1. It functions in the pathway cofactor metabolism; pyridoxal 5'-phosphate salvage; pyridoxal 5'-phosphate from pyridoxine 5'-phosphate: step 1/1. In terms of biological role, catalyzes the oxidation of either pyridoxine 5'-phosphate (PNP) or pyridoxamine 5'-phosphate (PMP) into pyridoxal 5'-phosphate (PLP). The polypeptide is Pyridoxine/pyridoxamine 5'-phosphate oxidase (Cupriavidus necator (strain ATCC 17699 / DSM 428 / KCTC 22496 / NCIMB 10442 / H16 / Stanier 337) (Ralstonia eutropha)).